An 873-amino-acid polypeptide reads, in one-letter code: Serine/threonine-protein phosphatase 4 regulatory subunit 4 (873 aa).

HEAT repeat units lie at residues 213 to 251, 252 to 290, and 392 to 427; these read ILPL…TKSV, VLPE…RSQT, and NFHM…SKLL. A coiled-coil region spans residues 686–720; it reads QKKFYEKDLLDQEKEREELLLLEMEQLEKEKQQND. The span at 713–737 shows a compositional bias: basic and acidic residues; it reads EKEKQQNDGRPMSDKMFEKKRRDTK. Residues 713–766 are disordered; the sequence is EKEKQQNDGRPMSDKMFEKKRRDTKTPTQSLPKNIPISVPGPSSVTPSTSKEIK. Residues 747–762 are compositionally biased toward low complexity; the sequence is IPISVPGPSSVTPSTS. Ser775 carries the post-translational modification Phosphoserine. Thr797 bears the Phosphothreonine mark. Positions 822–858 are enriched in polar residues; the sequence is TRNASSVPSSFSPNTPLPSTSRGTGNSVDPKSSGSKD. The tract at residues 822–873 is disordered; it reads TRNASSVPSSFSPNTPLPSTSRGTGNSVDPKSSGSKDTQPRKATLKSRKSNP. Over residues 864 to 873 the composition is skewed to basic residues; the sequence is ATLKSRKSNP.

As to quaternary structure, serine/threonine-protein phosphatase 4 (PP4) occurs in different assemblies of the catalytic and one or more regulatory subunits. Component of the PP4 complex PPP4C-PPP4R4.

It is found in the cytoplasm. Its function is as follows. Putative regulatory subunit of serine/threonine-protein phosphatase 4. This Homo sapiens (Human) protein is Serine/threonine-protein phosphatase 4 regulatory subunit 4 (PPP4R4).